Consider the following 68-residue polypeptide: Large ribosomal subunit protein uL29 (68 aa).

This sequence belongs to the universal ribosomal protein uL29 family.

This is Large ribosomal subunit protein uL29 (rpl29) from Archaeoglobus fulgidus (strain ATCC 49558 / DSM 4304 / JCM 9628 / NBRC 100126 / VC-16).